The chain runs to 180 residues: Ribulose bisphosphate carboxylase small subunit, chloroplastic (180 aa).

The transit peptide at 1 to 56 (MASSVLSSAAVATRSNVAQANMVAPFTGLKSAASFPVSRKQNLDITSIASNGGRVQ) directs the protein to the chloroplast.

Belongs to the RuBisCO small chain family. In terms of assembly, heterohexadecamer of 8 large and 8 small subunits. As to quaternary structure, (Microbial infection) Binds to tobamovirus movement protein at the plasmodesmata (e.g. tomato mosaic virus MP AC P69513); this interaction seems required for viral systemic movement.

Its subcellular location is the plastid. It localises to the chloroplast. The protein localises to the cell junction. It is found in the plasmodesma. RuBisCO catalyzes two reactions: the carboxylation of D-ribulose 1,5-bisphosphate, the primary event in carbon dioxide fixation, as well as the oxidative fragmentation of the pentose substrate. Both reactions occur simultaneously and in competition at the same active site. Although the small subunit is not catalytic it is essential for maximal activity. Involved in antiviral defenses. In terms of biological role, (Microbial infection) Required for tobamovirus movement (e.g. tobacco mosaic virus (TMV)). The protein is Ribulose bisphosphate carboxylase small subunit, chloroplastic of Nicotiana benthamiana.